The following is a 222-amino-acid chain: Superoxide dismutase [Mn], mitochondrial (222 aa).

A mitochondrion-targeting transit peptide spans 1-24 (MLSRAVCGTGRQLAPALGYLGSRQ). Mn(2+) is bound at residue H50. A 3'-nitrotyrosine modification is found at Y58. N6-acetyllysine; alternate occurs at positions 68 and 75. N6-succinyllysine; alternate occurs at positions 68 and 75. A Mn(2+)-binding site is contributed by H98. An N6-acetyllysine modification is found at K114. N6-acetyllysine; alternate occurs at positions 122 and 130. An N6-succinyllysine; alternate mark is found at K122 and K130. Residues D183 and H187 each coordinate Mn(2+). K202 bears the N6-acetyllysine mark.

This sequence belongs to the iron/manganese superoxide dismutase family. Homotetramer. Mn(2+) serves as cofactor. Nitrated under oxidative stress. Nitration coupled with oxidation inhibits the catalytic activity. In terms of processing, acetylation at Lys-122 decreases enzymatic activity. Deacetylated by SIRT3 upon exposure to ionizing radiations or after long fasting. Post-translationally, polyubiquitinated; leading to proteasomal degradation. Deubiquitinated by USP36 which increases protein stability.

The protein resides in the mitochondrion matrix. The enzyme catalyses 2 superoxide + 2 H(+) = H2O2 + O2. In terms of biological role, destroys superoxide anion radicals which are normally produced within the cells and which are toxic to biological systems. This chain is Superoxide dismutase [Mn], mitochondrial (SOD2), found in Macaca fascicularis (Crab-eating macaque).